Here is a 721-residue protein sequence, read N- to C-terminus: YTH domain-containing protein 1 (721 aa).

Over residues 29–38 (EADIAEELQD) the composition is skewed to acidic residues. A disordered region spans residues 29 to 239 (EADIAEELQD…GGGTHSHSQK (211 aa)). The span at 48–75 (SESNGGDSSDSEPSISSVSTATSSLAGS) shows a compositional bias: low complexity. Residues 135-151 (ASDKVKSKSPDTEDRQP) are compositionally biased toward basic and acidic residues. Residues 254-391 (TRFFLIKSNN…KIGGELCRLF (138 aa)) form the YTH domain. Residues 260–262 (KSN), W276, and W327 contribute to the RNA site. 3 disordered regions span residues 424–471 (PPRS…RHHH), 580–605 (DGPG…DKAP), and 651–721 (AGGG…DNRR). Residues 432 to 443 (GHGGGGRGGGRG) show a composition bias toward gly residues. Positions 451-471 (PMRHKRSYHGAPHHRPYRHHH) are enriched in basic residues. Pro residues predominate over residues 583-600 (GAPPLPDYPPPQRPPPPG). Over residues 651–670 (AGGGMGAGGGSGGGMGGPGG) the composition is skewed to gly residues. Over residues 699–708 (RDSRPFRERG) the composition is skewed to basic and acidic residues.

Its subcellular location is the nucleus. Functionally, regulator of alternative splicing that specifically recognizes and binds N6-methyladenosine (m6A)-containing RNAs. Acts by acting as a reader of m6A methylation. Required for sex determination and dosage compensation via Sxl alternative splicing: m6A methylation acts as a key regulator of Sxl pre-mRNA and promotes female-specific alternative splicing of Sxl, which determines female physiognomy. M6A methylation is also required for neuronal functions. This chain is YTH domain-containing protein 1, found in Drosophila melanogaster (Fruit fly).